Here is a 65-residue protein sequence, read N- to C-terminus: Large ribosomal subunit protein bL35 (65 aa).

It belongs to the bacterial ribosomal protein bL35 family.

This is Large ribosomal subunit protein bL35 from Ruminiclostridium cellulolyticum (strain ATCC 35319 / DSM 5812 / JCM 6584 / H10) (Clostridium cellulolyticum).